The chain runs to 563 residues: PHD finger protein EHD3 (563 aa).

Residues 1–46 form a disordered region; the sequence is MGSQNRPPPPRKRQPPPPEDHLVTYKRRRSKETQPLPLMANGANSK. PHD-type zinc fingers lie at residues 296–348, 420–472, and 474–524; these read LCPC…CSFK, SNLC…CWYC, and SCLC…CKIR.

In terms of assembly, interacts with TRX1. In terms of tissue distribution, expressed in shoot apical meristem and leaves.

The protein resides in the nucleus. Functionally, probable transcription factor involved in the regulation of floral induction under long day (LD) conditions. Promotes photoperiodic flowering by repressing GHD7, a major floral repressor. Seems to function independently of HD1. The polypeptide is PHD finger protein EHD3 (Oryza sativa subsp. japonica (Rice)).